An 898-amino-acid chain; its full sequence is Chaperone protein ClpB 1 (898 aa).

The Clp R domain occupies 6 to 148 (PTKFTEQAWD…ELAIKAIRGS (143 aa)). Repeat regions lie at residues 9–74 (FTEQ…TNRQ) and 85–148 (LGRS…IRGS). Residues 161–344 (EALDKYGRDL…RRFQQVYVKQ (184 aa)) form an NBD1 region. 208–215 (GEPGVGKT) contacts ATP. Residues 345-560 (PSVDDTISIL…IAEIVAGWTG (216 aa)) are linker. Residues 395 to 536 (IDLVDEAAAR…KESKLLEIQG (142 aa)) are a coiled coil. The NBD2 stretch occupies residues 570–781 (ERQKLLQLEG…RIDDLIIFHT (212 aa)). 620–627 (GPTGVGKT) serves as a coordination point for ATP. A C-terminal region spans residues 782–898 (LKRDELRRIV…TAVEVEVLSS (117 aa)).

This sequence belongs to the ClpA/ClpB family. In terms of assembly, homohexamer. The oligomerization is ATP-dependent.

The protein localises to the cytoplasm. Its function is as follows. Part of a stress-induced multi-chaperone system, it is involved in the recovery of the cell from heat-induced damage, in cooperation with DnaK, DnaJ and GrpE. Acts before DnaK, in the processing of protein aggregates. Protein binding stimulates the ATPase activity; ATP hydrolysis unfolds the denatured protein aggregates, which probably helps expose new hydrophobic binding sites on the surface of ClpB-bound aggregates, contributing to the solubilization and refolding of denatured protein aggregates by DnaK. The polypeptide is Chaperone protein ClpB 1 (clpB1) (Synechocystis sp. (strain ATCC 27184 / PCC 6803 / Kazusa)).